Consider the following 403-residue polypeptide: Putative F-box protein At5g41500 (403 aa).

The region spanning 2 to 47 is the F-box domain; the sequence is ATTISNLPRELIEEILSRVPLRAMKAMRLTCKSWNNLSKSESFMKM.

This Arabidopsis thaliana (Mouse-ear cress) protein is Putative F-box protein At5g41500.